The chain runs to 243 residues: Protein IN2-1 (243 aa).

Residues 1-26 (MAAAAGPSSSVKESLPPALGSTSQPP) form a disordered region. Residues 31-112 (GTTRLYICYF…YIDSNFDGPA (82 aa)) form the GST N-terminal domain. Residues lysine 70, valine 84, and 96–97 (ES) each bind glutathione. The GST C-terminal domain maps to 109 to 240 (DGPALLPEDA…FLLDLAKSHL (132 aa)).

It belongs to the GST superfamily. HSP26 family. Leaves and roots. It is more strongly induced in the leaves relative to the roots.

The sequence is that of Protein IN2-1 (IN2-1) from Zea mays (Maize).